Consider the following 155-residue polypeptide: Pre-hexon-linking protein VIII (155 aa).

Positions 44 to 84 are excised as a propeptide; it reads GVHRTKDIKPEDLVGRGIQLNSYQPPTTRLKPERVFQLAGG.

Belongs to the adenoviridae hexon-linking protein family. Interacts with the peripentonal hexons as well as the hexons in the facets. Part of a complex composed of the core-capsid bridging protein, the endosome lysis protein VI and the hexon-linking protein VIII; these interactions bridge the virus core to the capsid. In terms of processing, cleaved by the viral protease during virion maturation. May cause the middle segment to be shed from the capsid.

It localises to the virion. The protein localises to the host nucleus. In terms of biological role, structural component of the virion that acts as a cement protein on the capsid interior and which glue the peripentonal hexons and group-of-nine hexons together. The sequence is that of Pre-hexon-linking protein VIII from Bos taurus (Bovine).